A 287-amino-acid chain; its full sequence is 4-diphosphocytidyl-2-C-methyl-D-erythritol kinase (287 aa).

Lysine 10 is an active-site residue. 92-102 (PLAAGLAGGSA) provides a ligand contact to ATP. Aspartate 134 is an active-site residue.

Belongs to the GHMP kinase family. IspE subfamily.

The catalysed reaction is 4-CDP-2-C-methyl-D-erythritol + ATP = 4-CDP-2-C-methyl-D-erythritol 2-phosphate + ADP + H(+). It functions in the pathway isoprenoid biosynthesis; isopentenyl diphosphate biosynthesis via DXP pathway; isopentenyl diphosphate from 1-deoxy-D-xylulose 5-phosphate: step 3/6. In terms of biological role, catalyzes the phosphorylation of the position 2 hydroxy group of 4-diphosphocytidyl-2C-methyl-D-erythritol. This is 4-diphosphocytidyl-2-C-methyl-D-erythritol kinase from Caldanaerobacter subterraneus subsp. tengcongensis (strain DSM 15242 / JCM 11007 / NBRC 100824 / MB4) (Thermoanaerobacter tengcongensis).